Consider the following 214-residue polypeptide: Riboflavin kinase (214 aa).

The disordered stretch occupies residues Met-1–Ser-26. Mg(2+)-binding residues include Thr-44 and Asn-46. The Nucleophile role is filled by Glu-116.

It belongs to the flavokinase family. The cofactor is Zn(2+). Mg(2+) is required as a cofactor.

The enzyme catalyses riboflavin + ATP = FMN + ADP + H(+). Its pathway is cofactor biosynthesis; FMN biosynthesis; FMN from riboflavin (ATP route): step 1/1. In terms of biological role, catalyzes the phosphorylation of riboflavin (vitamin B2) to form flavin mononucleotide (FMN) coenzyme. In Aspergillus fumigatus (strain ATCC MYA-4609 / CBS 101355 / FGSC A1100 / Af293) (Neosartorya fumigata), this protein is Riboflavin kinase (fmn1).